The sequence spans 322 residues: MSGELPPNINIKEPRWDQSTFIGRAKHFFTVTDPRNILLTNEQLEAARKVVHDYRQGIIPSGLTENELWRAKYIYDSAFHPDTGEKMILIGRMSAQVPMNMTITGCMMTFYRTTPAVLFWQWINQSFNAVVNYTNRSGDAPLTVNELGTAYVSATTGAVATALGLNALTKHVSPLIGRFVPFAAVAAANCINIPLMRQRELKVGIPVTDENGNRLGESANAAKQAITQVVVSRILMAAPGMAIPPFIMNTLEKKAFLKRFPWMSAPVQVGIVGFCLVFATPLCCALFPQKSSMSVTSLEAELQARIRETYPELRRVYFNKGL.

Serine 2 carries the N-acetylserine modification. Residues 2 to 102 lie on the Mitochondrial matrix side of the membrane; that stretch reads SGELPPNINI…MSAQVPMNMT (101 aa). A helical membrane pass occupies residues 103–120; that stretch reads ITGCMMTFYRTTPAVLFW. Topologically, residues 121 to 146 are mitochondrial intermembrane; sequence QWINQSFNAVVNYTNRSGDAPLTVNE. Residues 147–167 traverse the membrane as a helical segment; the sequence is LGTAYVSATTGAVATALGLNA. Over 168–174 the chain is Mitochondrial matrix; that stretch reads LTKHVSP. The helical transmembrane segment at 175-195 threads the bilayer; the sequence is LIGRFVPFAAVAAANCINIPL. Topologically, residues 196–228 are mitochondrial intermembrane; that stretch reads MRQRELKVGIPVTDENGNRLGESANAAKQAITQ. A helical transmembrane segment spans residues 229-249; it reads VVVSRILMAAPGMAIPPFIMN. The Mitochondrial matrix segment spans residues 250–266; that stretch reads TLEKKAFLKRFPWMSAP. Residues 267-287 traverse the membrane as a helical segment; that stretch reads VQVGIVGFCLVFATPLCCALF. Residues 288-322 are Mitochondrial intermembrane-facing; it reads PQKSSMSVTSLEAELQARIRETYPELRRVYFNKGL.

Belongs to the sideroflexin family.

The protein resides in the mitochondrion inner membrane. The catalysed reaction is L-serine(in) = L-serine(out). It catalyses the reaction L-alanine(in) = L-alanine(out). The enzyme catalyses L-cysteine(in) = L-cysteine(out). Its function is as follows. Amino acid transporter importing serine, an essential substrate of the mitochondrial branch of the one-carbon pathway, into mitochondria. Mitochondrial serine is then converted to glycine and formate, which exits to the cytosol where it is used to generate the charged folates that serve as one-carbon donors. May also transport other amino acids including alanine and cysteine. In Bos taurus (Bovine), this protein is Sideroflexin-1 (SFXN1).